The sequence spans 445 residues: MKQRQFFGTDGIRGKVGAGKMTPELALKLGWAAGRVLSRTGTKKVIIGKDTRISGYLFESALEAGLSAAGLNVLLVGPMPTPAVAYLTRTFRAEAGIVISASHNPYYDNGIKFFSTDGSKLDDAIELEIEAELEKPLTCVESHLLGKAKRIDDAAGRYIEYCKGNFPADQTLEGLKIVVDCAHGATYHIAPSVFSELGAEVIAIGDKPNGTNINHEVGATSMGKICETVLAEGADLGIALDGDGDRIMMVNRKGEVIDGDQILYILAADAQKRGQLKGGVVGTLMSNLGLDLALQALDIPFLRSNVGDRYVMEMLKKNDWRIGGENSGHILDLDHGTTGDGIVAGILVLAAMRRQNATLEQLVEPMKMLPQVLINVRFEGSNNPLDSDLVKSAQREVEQSLGARGRVLLRKSGTEPLIRVMVEGDDHDLVLAHANRIAAAVKLGC.

Ser-102 functions as the Phosphoserine intermediate in the catalytic mechanism. Positions 102, 241, 243, and 245 each coordinate Mg(2+). Phosphoserine is present on Ser-102.

This sequence belongs to the phosphohexose mutase family. Mg(2+) is required as a cofactor. In terms of processing, activated by phosphorylation.

It carries out the reaction alpha-D-glucosamine 1-phosphate = D-glucosamine 6-phosphate. Functionally, catalyzes the conversion of glucosamine-6-phosphate to glucosamine-1-phosphate. The chain is Phosphoglucosamine mutase from Shewanella denitrificans (strain OS217 / ATCC BAA-1090 / DSM 15013).